A 1371-amino-acid chain; its full sequence is DNA-directed RNA polymerase subunit beta' (1371 aa).

Positions 71, 73, 86, and 89 each coordinate Zn(2+). Residues aspartate 461, aspartate 463, and aspartate 465 each contribute to the Mg(2+) site. Residues cysteine 803, cysteine 877, cysteine 884, and cysteine 887 each coordinate Zn(2+).

It belongs to the RNA polymerase beta' chain family. In terms of assembly, the RNAP catalytic core consists of 2 alpha, 1 beta, 1 beta' and 1 omega subunit. When a sigma factor is associated with the core the holoenzyme is formed, which can initiate transcription. It depends on Mg(2+) as a cofactor. Requires Zn(2+) as cofactor.

It carries out the reaction RNA(n) + a ribonucleoside 5'-triphosphate = RNA(n+1) + diphosphate. In terms of biological role, DNA-dependent RNA polymerase catalyzes the transcription of DNA into RNA using the four ribonucleoside triphosphates as substrates. The chain is DNA-directed RNA polymerase subunit beta' from Thermodesulfovibrio yellowstonii (strain ATCC 51303 / DSM 11347 / YP87).